A 441-amino-acid chain; its full sequence is Probable carboxypeptidase NFIA_052450 (441 aa).

The signal sequence occupies residues 1–16; it reads MKPLSSLLLSAALSAA. N-linked (GlcNAc...) asparagine glycosylation is found at Asn-88 and Asn-150. A Zn(2+)-binding site is contributed by Asp-166. The active-site Proton acceptor is Glu-198. Residue Glu-199 participates in Zn(2+) binding. N-linked (GlcNAc...) asparagine glycosylation is found at Asn-354 and Asn-373.

This sequence belongs to the peptidase M20A family. Zn(2+) serves as cofactor.

It is found in the secreted. This is Probable carboxypeptidase NFIA_052450 from Neosartorya fischeri (strain ATCC 1020 / DSM 3700 / CBS 544.65 / FGSC A1164 / JCM 1740 / NRRL 181 / WB 181) (Aspergillus fischerianus).